The sequence spans 143 residues: FAD synthase (143 aa).

ATP-binding positions include 10-11 (TF), 15-18 (HPGH), and Asp93.

The protein belongs to the archaeal FAD synthase family. In terms of assembly, homodimer. A divalent metal cation is required as a cofactor.

It catalyses the reaction FMN + ATP + H(+) = FAD + diphosphate. It functions in the pathway cofactor biosynthesis; FAD biosynthesis; FAD from FMN: step 1/1. Its function is as follows. Catalyzes the transfer of the AMP portion of ATP to flavin mononucleotide (FMN) to produce flavin adenine dinucleotide (FAD) coenzyme. The protein is FAD synthase of Haloterrigena turkmenica (strain ATCC 51198 / DSM 5511 / JCM 9101 / NCIMB 13204 / VKM B-1734 / 4k) (Halococcus turkmenicus).